Consider the following 418-residue polypeptide: Tektin-1 (418 aa).

3 coiled-coil regions span residues 21–84 (KNQY…LEQL), 268–308 (LKET…DQEG), and 336–383 (RLIK…ENTI). The tract at residues 399–418 (PRDGDDHGEWAGGSHPEAVC) is disordered.

It belongs to the tektin family. As to quaternary structure, microtubule inner protein component of sperm flagellar doublet microtubules. In terms of processing, ubiquitinated, leading to its degradation. Deubiquitinated by USP16, promoting its stability. Expressed in trachea multiciliated cells.

The protein localises to the cytoplasm. The protein resides in the cytoskeleton. It localises to the cilium axoneme. Its subcellular location is the flagellum axoneme. Microtubule inner protein (MIP) part of the dynein-decorated doublet microtubules (DMTs) in cilia and flagellar axoneme. Forms filamentous polymers in the walls of ciliary and flagellar microtubules. The sequence is that of Tektin-1 (TEKT1) from Bos taurus (Bovine).